We begin with the raw amino-acid sequence, 225 residues long: Interleukin-6 (225 aa).

The signal sequence occupies residues 1–24 (MPSRLNVFWLCAAALAALLRCAPA). A glycan (N-linked (GlcNAc...) asparagine) is linked at asparagine 98.

The protein belongs to the IL-6 superfamily. In terms of assembly, component of a hexamer of two molecules each of IL6, IL6R and IL6ST; first binds to IL6R to associate with the signaling subunit IL6ST. As to expression, expressed in white muscle, skin, spleen, anterior intestine and stomach. Not expressed in brain, gill, head kidney, posterior intestine and adipose tissue.

The protein resides in the secreted. In terms of biological role, cytokine with a wide variety of biological functions in immunity, tissue regeneration, and metabolism. Binds to IL6R, then the complex associates to the signaling subunit IL6ST/gp130 to trigger the intracellular IL6-signaling pathway. The interaction with the membrane-bound IL6R and IL6ST stimulates 'classic signaling', whereas the binding of IL6 and soluble IL6R to IL6ST stimulates 'trans-signaling'. Alternatively, 'cluster signaling' occurs when membrane-bound IL6:IL6R complexes on transmitter cells activate IL6ST receptors on neighboring receiver cells. The chain is Interleukin-6 (il6) from Sparus aurata (Gilthead sea bream).